The primary structure comprises 684 residues: Methionine--tRNA ligase (684 aa).

A 'HIGH' region motif is present at residues 15-25 (PYANGAIHLGH). Residues Cys146, Cys149, Cys159, and Cys162 each coordinate Zn(2+). Positions 331–335 (KMSKS) match the 'KMSKS' region motif. Lys334 lines the ATP pocket. In terms of domain architecture, tRNA-binding spans 582–684 (DFAKLDLRVA…SGVTAGMQVR (103 aa)).

Belongs to the class-I aminoacyl-tRNA synthetase family. MetG type 1 subfamily. Homodimer. It depends on Zn(2+) as a cofactor.

Its subcellular location is the cytoplasm. The catalysed reaction is tRNA(Met) + L-methionine + ATP = L-methionyl-tRNA(Met) + AMP + diphosphate. Functionally, is required not only for elongation of protein synthesis but also for the initiation of all mRNA translation through initiator tRNA(fMet) aminoacylation. This chain is Methionine--tRNA ligase, found in Glaesserella parasuis serovar 5 (strain SH0165) (Haemophilus parasuis).